We begin with the raw amino-acid sequence, 432 residues long: Glutamyl-tRNA reductase (432 aa).

Substrate is bound by residues 49-52, Ser101, 106-108, and Gln112; these read TCNR and EPQ. Cys50 serves as the catalytic Nucleophile. NADP(+) is bound at residue 181–186; the sequence is GAGETI. Positions 408 to 432 are disordered; that stretch reads PEKPGYRHPPVATPIVRTDDANPAP.

This sequence belongs to the glutamyl-tRNA reductase family. In terms of assembly, homodimer.

The catalysed reaction is (S)-4-amino-5-oxopentanoate + tRNA(Glu) + NADP(+) = L-glutamyl-tRNA(Glu) + NADPH + H(+). Its pathway is porphyrin-containing compound metabolism; protoporphyrin-IX biosynthesis; 5-aminolevulinate from L-glutamyl-tRNA(Glu): step 1/2. Functionally, catalyzes the NADPH-dependent reduction of glutamyl-tRNA(Glu) to glutamate 1-semialdehyde (GSA). This is Glutamyl-tRNA reductase from Xanthomonas campestris pv. campestris (strain B100).